A 1117-amino-acid polypeptide reads, in one-letter code: Endogenous retrovirus group K member 9 Pol protein (1117 aa).

Residue G2 is the site of N-myristoyl glycine attachment. Positions 58-195 (KDWKRIGKEL…AGQVPVTLQP (138 aa)) constitute a Reverse transcriptase domain. A disordered region spans residues 165-264 (GKGPELVGPS…APPSRQGSEL (100 aa)). The span at 232–247 (GMPPAPQGRAPYPQPP) shows a compositional bias: pro residues. 2 CCHC-type zinc fingers span residues 544–561 (GKCYNCGQIGHLKKNCPV) and 580–597 (DLCPRCKKGKHWASQCRS). Residues 598-629 (KFDKNGQPLSGNEQRGQPQAPQQTGAFPIQPF) are disordered. Polar residues predominate over residues 604 to 622 (QPLSGNEQRGQPQAPQQTG). A Peptidase A2 domain is found at 800-875 (FEGLVDTGAD…IPLNLWGRDL (76 aa)). Residue D805 is part of the active site. A G-patch domain is found at 890–936 (YSPTSQKIMTKRGYIPGKGLGKNEDGIKIPFEAKINQKREGIGYPFL).

This sequence belongs to the beta type-B retroviral polymerase family. HERV class-II K(HML-2) pol subfamily. Post-translationally, myristoylation is essential for retroviral assembly. Alteration of the glycine residue leads to a block in the budding of particles and an accumulation of Gag inside the cell. Specific enzymatic cleavages may yield mature proteins.

The protein localises to the cell membrane. The enzyme catalyses Processing at the authentic HIV-1 PR recognition site and release of the mature p17 matrix and the p24 capsid protein, as a result of the cleavage of the -SQNY-|-PIVQ- cleavage site.. It catalyses the reaction DNA(n) + a 2'-deoxyribonucleoside 5'-triphosphate = DNA(n+1) + diphosphate. It carries out the reaction Endonucleolytic cleavage to 5'-phosphomonoester.. The products of the Gag polyproteins of infectious retroviruses perform highly complex orchestrated tasks during the assembly, budding, maturation, and infection stages of the viral replication cycle. During viral assembly, the proteins form membrane associations and self-associations that ultimately result in budding of an immature virion from the infected cell. Gag precursors also function during viral assembly to selectively bind and package two plus strands of genomic RNA. Endogenous Gag proteins may have kept, lost or modified their original function during evolution. In terms of biological role, early post-infection, the reverse transcriptase converts the viral RNA genome into double-stranded viral DNA. The RNase H domain of the reverse transcriptase performs two functions. It degrades the RNA template and specifically removes the RNA primer from the RNA/DNA hybrid. Following nuclear import, the integrase catalyzes the insertion of the linear, double-stranded viral DNA into the host cell chromosome. Endogenous Pol proteins may have kept, lost or modified their original function during evolution. The chain is Endogenous retrovirus group K member 9 Pol protein (ERVK-9) from Homo sapiens (Human).